A 454-amino-acid polypeptide reads, in one-letter code: Glutamyl-tRNA reductase (454 aa).

Substrate-binding positions include Thr-49–Arg-52, Ser-109, Glu-114–Gln-116, and Gln-120. Catalysis depends on Cys-50, which acts as the Nucleophile. Gly-189–Gly-194 provides a ligand contact to NADP(+).

Belongs to the glutamyl-tRNA reductase family. As to quaternary structure, homodimer.

It catalyses the reaction (S)-4-amino-5-oxopentanoate + tRNA(Glu) + NADP(+) = L-glutamyl-tRNA(Glu) + NADPH + H(+). It functions in the pathway porphyrin-containing compound metabolism; protoporphyrin-IX biosynthesis; 5-aminolevulinate from L-glutamyl-tRNA(Glu): step 1/2. Functionally, catalyzes the NADPH-dependent reduction of glutamyl-tRNA(Glu) to glutamate 1-semialdehyde (GSA). This is Glutamyl-tRNA reductase from Geobacillus kaustophilus (strain HTA426).